The sequence spans 226 residues: Leucyl/phenylalanyl-tRNA--protein transferase (226 aa).

The protein belongs to the L/F-transferase family.

It localises to the cytoplasm. It catalyses the reaction N-terminal L-lysyl-[protein] + L-leucyl-tRNA(Leu) = N-terminal L-leucyl-L-lysyl-[protein] + tRNA(Leu) + H(+). The enzyme catalyses N-terminal L-arginyl-[protein] + L-leucyl-tRNA(Leu) = N-terminal L-leucyl-L-arginyl-[protein] + tRNA(Leu) + H(+). It carries out the reaction L-phenylalanyl-tRNA(Phe) + an N-terminal L-alpha-aminoacyl-[protein] = an N-terminal L-phenylalanyl-L-alpha-aminoacyl-[protein] + tRNA(Phe). Functions in the N-end rule pathway of protein degradation where it conjugates Leu, Phe and, less efficiently, Met from aminoacyl-tRNAs to the N-termini of proteins containing an N-terminal arginine or lysine. This Pseudomonas putida (strain ATCC 47054 / DSM 6125 / CFBP 8728 / NCIMB 11950 / KT2440) protein is Leucyl/phenylalanyl-tRNA--protein transferase.